A 398-amino-acid chain; its full sequence is Elongation factor Tu (398 aa).

The 199-residue stretch at 10–208 (KPHVNVGTIG…ALDDYIPEPE (199 aa)) folds into the tr-type G domain. The G1 stretch occupies residues 19-26 (GHVDHGKT). 19-26 (GHVDHGKT) serves as a coordination point for GTP. Position 26 (T26) interacts with Mg(2+). The G2 stretch occupies residues 61-65 (GITIA). Residues 82–85 (DCPG) form a G3 region. Residues 82–86 (DCPGH) and 137–140 (NKAD) contribute to the GTP site. The tract at residues 137-140 (NKAD) is G4. The G5 stretch occupies residues 175–177 (SAL).

Belongs to the TRAFAC class translation factor GTPase superfamily. Classic translation factor GTPase family. EF-Tu/EF-1A subfamily. Monomer.

Its subcellular location is the cytoplasm. It carries out the reaction GTP + H2O = GDP + phosphate + H(+). Functionally, GTP hydrolase that promotes the GTP-dependent binding of aminoacyl-tRNA to the A-site of ribosomes during protein biosynthesis. The polypeptide is Elongation factor Tu (Marinobacter nauticus (strain ATCC 700491 / DSM 11845 / VT8) (Marinobacter aquaeolei)).